Consider the following 753-residue polypeptide: MTILNHTLGFPRVGLRRELKKAQESYWAGNSTREELLAVGRELRARHWDQQKQAGIDLLPVGDFAWYDHVLTTSLLLGNVPARHQNKDGSVDIDTLFRIGRGRAPTGEPAAAAEMTKWFNTNYHYMVPEFVKGQQFKLTWTQLLEEVDEALALGHNVKPVLLGPVTWLWLGKVKGEQFDRLSLLNDILPVYQQVLAELEKRGIEWVQIDEPALVLELPQAWLDAYKPAYDALQGQVKLLLTTYFEGVTPNLDTITALPVQGLHVDLVHGKDGVAELHKRLPSDWLLSAGLINGRNVWRADLTEKYAQIKDIVGKRDLWVASSCSLLHSPIDLSVETRLDAEVKSWFAFALQKCHELALLRDALKSGDTAALAEWSAPIQARRHSTRVHNPAVEKRLAAITAQDSQRANVYEVRAEAQRARFKLPAWPTTTIGSFPQTTEIRTLRLDFKKGNLDANNYRTGIAEHIKQAIVEQERLGLDVLVHGEAERNDMVEYFGEHLDGFVFTQNGWVQSYGSRCVKPPIVIGDVSRPAPITVEWAKYAQSLTDKPVKGMLTGPVTILCWSFPREDVSRETIAKQIALALRDEVADLEAAGIGIIQIDEPALREGLPLRRSDWDAYLQWGVEAFRINAAVAKDDTQIHTHMCYCEFNDIMDSIAALDADVITIETSRSDMELLESFEEFDYPNEIGPGVYDIHSPNVPSVEWIEALLKKAAKRIPAERLWVNPDCGLKTRGWPETRAALANMVQAAQNLRRG.

5-methyltetrahydropteroyltri-L-glutamate-binding positions include 17–20 and K117; that span reads RELK. L-homocysteine-binding positions include 431-433 and E484; that span reads IGS. Residues 431-433 and E484 contribute to the L-methionine site; that span reads IGS. 5-methyltetrahydropteroyltri-L-glutamate contacts are provided by residues 515-516 and W561; that span reads RC. L-homocysteine is bound at residue D599. L-methionine is bound at residue D599. E605 is a 5-methyltetrahydropteroyltri-L-glutamate binding site. Zn(2+) is bound by residues H641, C643, and E665. H694 (proton donor) is an active-site residue. C726 contacts Zn(2+).

This sequence belongs to the vitamin-B12 independent methionine synthase family. The cofactor is Zn(2+).

It catalyses the reaction 5-methyltetrahydropteroyltri-L-glutamate + L-homocysteine = tetrahydropteroyltri-L-glutamate + L-methionine. The protein operates within amino-acid biosynthesis; L-methionine biosynthesis via de novo pathway; L-methionine from L-homocysteine (MetE route): step 1/1. Functionally, catalyzes the transfer of a methyl group from 5-methyltetrahydrofolate to homocysteine resulting in methionine formation. This chain is 5-methyltetrahydropteroyltriglutamate--homocysteine methyltransferase, found in Shigella boydii serotype 18 (strain CDC 3083-94 / BS512).